The chain runs to 374 residues: Heme A synthase (374 aa).

A disordered region spans residues 1 to 22 (MSDHIRAASSPSRHGSEHGWQH). The next 5 helical transmembrane spans lie at 32-52 (ILVA…VMLG), 118-138 (RLWG…LAVT), 149-169 (LILI…MVAS), 184-204 (VVHL…ALSV), and 226-246 (LGLV…HAGL). A heme-binding site is contributed by His281. 3 helical membrane passes run 283–300 (LLAT…LIGF), 309–329 (AVLP…ATLL), and 332–352 (VAVP…TAAI). His340 is a heme binding site.

This sequence belongs to the COX15/CtaA family. Type 2 subfamily. In terms of assembly, interacts with CtaB. Heme b is required as a cofactor.

The protein localises to the cell membrane. It carries out the reaction Fe(II)-heme o + 2 A + H2O = Fe(II)-heme a + 2 AH2. It participates in porphyrin-containing compound metabolism; heme A biosynthesis; heme A from heme O: step 1/1. Its function is as follows. Catalyzes the conversion of heme O to heme A by two successive hydroxylations of the methyl group at C8. The first hydroxylation forms heme I, the second hydroxylation results in an unstable dihydroxymethyl group, which spontaneously dehydrates, resulting in the formyl group of heme A. This Granulibacter bethesdensis (strain ATCC BAA-1260 / CGDNIH1) protein is Heme A synthase.